Consider the following 205-residue polypeptide: Probable thymidylate kinase (205 aa).

ATP is bound at residue 7-14 (GIDGAGKS).

The protein belongs to the thymidylate kinase family.

It carries out the reaction dTMP + ATP = dTDP + ADP. The protein is Probable thymidylate kinase of Thermococcus kodakarensis (strain ATCC BAA-918 / JCM 12380 / KOD1) (Pyrococcus kodakaraensis (strain KOD1)).